A 303-amino-acid polypeptide reads, in one-letter code: MKVIFMGTPEFAVPALKKLITHHEVKAVFTQQPKAKGRGLNLAKSPIHQLAFEHQIPVYTPSTLRNDEIINLINKVNADIIVVIAYGFIVPKAILEAKKYGCLNIHPSDLPRHRGAAPLQRTIIEGDRKSSVCIMRMDTGLDTGDILMKEDFDLEERITLEELHNKCANLGAELLIKTLANIDNIVPITQPSDGVTYAHKLTKAEGKINWHESAYKIDCKIRGMNPWPGVYFSYNDKIIKILEAEYLNADHHFTSGTVISDKLEIACGSGILRVKKLQQESKKALNIEEFLRGTNILKDTVLK.

Ser-108–Pro-111 contacts (6S)-5,6,7,8-tetrahydrofolate.

Belongs to the Fmt family.

The enzyme catalyses L-methionyl-tRNA(fMet) + (6R)-10-formyltetrahydrofolate = N-formyl-L-methionyl-tRNA(fMet) + (6S)-5,6,7,8-tetrahydrofolate + H(+). Functionally, attaches a formyl group to the free amino group of methionyl-tRNA(fMet). The formyl group appears to play a dual role in the initiator identity of N-formylmethionyl-tRNA by promoting its recognition by IF2 and preventing the misappropriation of this tRNA by the elongation apparatus. The chain is Methionyl-tRNA formyltransferase from Rickettsia peacockii (strain Rustic).